Here is a 144-residue protein sequence, read N- to C-terminus: Deoxyuridine 5'-triphosphate nucleotidohydrolase (144 aa).

Substrate is bound by residues 63–65, asparagine 76, 80–82, and lysine 90; these read RSG and TID.

Belongs to the dUTPase family. Mg(2+) serves as cofactor.

The enzyme catalyses dUTP + H2O = dUMP + diphosphate + H(+). Its pathway is pyrimidine metabolism; dUMP biosynthesis; dUMP from dCTP (dUTP route): step 2/2. Functionally, this enzyme is involved in nucleotide metabolism: it produces dUMP, the immediate precursor of thymidine nucleotides and it decreases the intracellular concentration of dUTP so that uracil cannot be incorporated into DNA. The polypeptide is Deoxyuridine 5'-triphosphate nucleotidohydrolase (Hydrogenobaculum sp. (strain Y04AAS1)).